The primary structure comprises 159 residues: Phosphopantetheine adenylyltransferase (159 aa).

Substrate is bound at residue S8. ATP-binding positions include 8 to 9 (SF) and H16. Positions 40, 73, and 87 each coordinate substrate. ATP is bound by residues 88-90 (GLR), E98, and 122-128 (YGYVSST).

Belongs to the bacterial CoaD family. As to quaternary structure, homohexamer. Mg(2+) is required as a cofactor.

It localises to the cytoplasm. It carries out the reaction (R)-4'-phosphopantetheine + ATP + H(+) = 3'-dephospho-CoA + diphosphate. It participates in cofactor biosynthesis; coenzyme A biosynthesis; CoA from (R)-pantothenate: step 4/5. Reversibly transfers an adenylyl group from ATP to 4'-phosphopantetheine, yielding dephospho-CoA (dPCoA) and pyrophosphate. The chain is Phosphopantetheine adenylyltransferase from Corynebacterium efficiens (strain DSM 44549 / YS-314 / AJ 12310 / JCM 11189 / NBRC 100395).